The chain runs to 177 residues: Large ribosomal subunit protein uL5 (177 aa).

Belongs to the universal ribosomal protein uL5 family. In terms of assembly, part of the 50S ribosomal subunit; part of the 5S rRNA/L5/L18/L25 subcomplex. Contacts the 5S rRNA and the P site tRNA. Forms a bridge to the 30S subunit in the 70S ribosome.

In terms of biological role, this is one of the proteins that bind and probably mediate the attachment of the 5S RNA into the large ribosomal subunit, where it forms part of the central protuberance. In the 70S ribosome it contacts protein S13 of the 30S subunit (bridge B1b), connecting the 2 subunits; this bridge is implicated in subunit movement. Contacts the P site tRNA; the 5S rRNA and some of its associated proteins might help stabilize positioning of ribosome-bound tRNAs. The protein is Large ribosomal subunit protein uL5 of Ehrlichia ruminantium (strain Welgevonden).